The chain runs to 589 residues: 3-hydroxy-3-methylglutaryl coenzyme A reductase 2-B (589 aa).

Residues 1-35 lie on the Lumenal side of the membrane; it reads MDVRRRPVTKTLTAGEPLKSQNQHSSSLKASDALP. The chain crosses the membrane as a helical span at residues 36–56; that stretch reads LPLYLTNGLFFTMFFSVMYFL. Residues 57-79 lie on the Cytoplasmic side of the membrane; it reads LHRWREKIRNSVPLHVVTLSELA. The chain crosses the membrane as a helical span at residues 80-100; it reads ALVLLVASVIYLLGFFGIGFV. Residues 101-544 are Lumenal-facing; the sequence is QSLIRPSPDS…SKESPGPNSR (444 aa). Asn-256 carries N-linked (GlcNAc...) asparagine glycosylation. The active-site Charge relay system is the Glu-268. Asn-332 is a glycosylation site (N-linked (GlcNAc...) asparagine). Residues Lys-400 and Asp-476 each act as charge relay system in the active site. Residues 545-565 traverse the membrane as a helical segment; sequence LLASIVAGSVLAGELSLMSAL. Residues 566–589 are Cytoplasmic-facing; the sequence is AAGQLVKSHMKFNRSSKDVSKLSS. The active-site Proton donor is the His-574.

The protein belongs to the HMG-CoA reductase family.

It localises to the endoplasmic reticulum membrane. The enzyme catalyses (R)-mevalonate + 2 NADP(+) + CoA = (3S)-3-hydroxy-3-methylglutaryl-CoA + 2 NADPH + 2 H(+). It participates in metabolic intermediate biosynthesis; (R)-mevalonate biosynthesis; (R)-mevalonate from acetyl-CoA: step 3/3. In terms of biological role, catalyzes the synthesis of mevalonate, the specific precursor of all isoprenoid compounds present in plants. Component of the triterpene saponins (e.g. ginsenosides or panaxosides) and phytosterols biosynthetic pathways. Promotes triterpenes accumulation in roots. The polypeptide is 3-hydroxy-3-methylglutaryl coenzyme A reductase 2-B (Panax ginseng (Korean ginseng)).